The primary structure comprises 294 residues: Small ribosomal subunit protein uS2 (294 aa).

Belongs to the universal ribosomal protein uS2 family.

This is Small ribosomal subunit protein uS2 (rpsB) from Mycoplasma pneumoniae (strain ATCC 29342 / M129 / Subtype 1) (Mycoplasmoides pneumoniae).